Consider the following 908-residue polypeptide: Glutamate receptor ionotropic, kainate 2 (908 aa).

The N-terminal stretch at Met1–Gly31 is a signal peptide. The Extracellular portion of the chain corresponds to Thr32–Pro561. Residues Asn67, Asn73, Asn275, Asn378, Asn412, Asn423, and Asn430 are each glycosylated (N-linked (GlcNAc...) asparagine). A disulfide bridge links Cys96 with Cys347. L-glutamate contacts are provided by Pro516, Ala518, and Arg523. An N-linked (GlcNAc...) asparagine glycan is attached at Asn546. Residues Asp562–Ala582 form a helical membrane-spanning segment. Residues Arg583–Gly638 are Cytoplasmic-facing. A helical membrane pass occupies residues Ile639–Leu659. Topologically, residues Thr660–Asn819 are extracellular. Ala689, Thr690, and Glu738 together coordinate L-glutamate. Residues Cys750 and Cys804 are joined by a disulfide bond. Asn751 carries N-linked (GlcNAc...) asparagine glycosylation. A helical transmembrane segment spans residues Ile820–Gly840. The Cytoplasmic portion of the chain corresponds to Glu841–Ala908. Residues Ser846 and Ser868 each carry the phosphoserine; by PKC modification. A Glycyl lysine isopeptide (Lys-Gly) (interchain with G-Cter in SUMO1) cross-link involves residue Lys886.

This sequence belongs to the glutamate-gated ion channel (TC 1.A.10.1) family. GRIK2 subfamily. Homotetramer and heterotetramer with GRIK5. Tetramers may be formed by the dimerization of dimers. Assembles into a kainate-gated homomeric channel that does not bind AMPA. Can form functional heteromeric receptors with GRIK3, GRIK4 and GRIK5. Interacts with NETO2. Interacts with DLG4. Interacts with NETO2. Interacts (via C-terminus) with KLHL17 (via kelch repeats); the interaction targets GRIK2 for degradation via ubiquitin-proteasome pathway. Post-translationally, sumoylation mediates kainate receptor-mediated endocytosis and regulates synaptic transmission. Sumoylation is enhanced by PIAS3 and desumoylated by SENP1. Ubiquitinated. Ubiquitination regulates the GRIK2 levels at the synapse by leading kainate receptor degradation through proteasome. In terms of processing, phosphorylated by PKC at Ser-868 upon agonist activation, this directly enhance sumoylation.

Its subcellular location is the cell membrane. The protein localises to the postsynaptic cell membrane. The enzyme catalyses Ca(2+)(in) = Ca(2+)(out). It carries out the reaction Na(+)(in) = Na(+)(out). With respect to regulation, cold receptor activity activated by temperatures between 10-19 degrees Celsius. Functionally, ionotropic glutamate receptor that functions as a cation-permeable ligand-gated ion channel, gated by L-glutamate and the glutamatergic agonist kainic acid. L-glutamate acts as an excitatory neurotransmitter at many synapses in the central nervous system. Binding of the excitatory neurotransmitter L-glutamate induces a conformation change, leading to the opening of the cation channel, and thereby converts the chemical signal to an electrical impulse. The receptor then desensitizes rapidly and enters a transient inactive state, characterized by the presence of bound agonist. Modulates cell surface expression of NETO2. In association with GRIK3, involved in presynaptic facilitation of glutamate release at hippocampal mossy fiber synapses. In terms of biological role, independent of its ionotropic glutamate receptor activity, acts as a thermoreceptor conferring sensitivity to cold temperatures. Functions in dorsal root ganglion neurons. The polypeptide is Glutamate receptor ionotropic, kainate 2 (GRIK2) (Macaca fascicularis (Crab-eating macaque)).